The chain runs to 461 residues: MDSGSAVDIISTLSDFLLVLIISNLSFKEALSTSRLSTRWRHICRETRNISFREDEIVTFADDSVARYYQRAALVAYMVGWVNNFTGGVVESFELRLSNSYAFEEGVTTLIEFAVSKNVKHLFLDLSEPRWVTNNDAAQLEPGLIKLPESFYKITSLVTLKLFGCRFEPSRLAKPGMVKTMFFRWIRLEMLSALIAKTPLLEILNIKNCWEIGLDAITGYNDRLMKLVFKYCSFSAQQTTLDVPNIQIFKYFGKVYRFEFASANKLMEEAYLDYREESRYNVSAGAIISGFLYSMLSAKTFTICPYVLQLIQECEDPVRLKAPMETRQLVLKTNFEPNEFVGIRFMLNSSPYLETLSFQMVGPRPIEEMVPQIDPEAYWGQNTSHECLKKTLKKVEVWSFYGGTHELRVLEYLIRYGRMLERVDLYQPIGLDDIQLLPIRAAADRVGEFEARSENLVVTFY.

The 49-residue stretch at 7-55 (VDIISTLSDFLLVLIISNLSFKEALSTSRLSTRWRHICRETRNISFRED) folds into the F-box domain.

Part of a SCF (ASK-cullin-F-box) protein ligase complex. Interacts with ASK4.

It is found in the nucleus. It functions in the pathway protein modification; protein ubiquitination. Component of SCF(ASK-cullin-F-box) E3 ubiquitin ligase complexes, which may mediate the ubiquitination and subsequent proteasomal degradation of target proteins. This is F-box protein At3g62230 from Arabidopsis thaliana (Mouse-ear cress).